A 571-amino-acid chain; its full sequence is Chitin-inducible gibberellin-responsive protein 1 (571 aa).

Residues 61–77 (TNTPDNQSSTETISAQP) show a composition bias toward polar residues. Disordered stretches follow at residues 61-80 (TNTPDNQSSTETISAQPISP) and 151-180 (QRSRTWSHESRQPLPGVGRSQFASGGYPTA). One can recognise a GRAS domain in the interval 192–571 (ELREDPQIIV…RKLISASAWH (380 aa)). Positions 199–259 (IIVKQLLTRC…VARHGNSGTN (61 aa)) are leucine repeat I (LRI). Residues 278–343 (MRILYNICPY…GGPPRVRITG (66 aa)) are VHIID. The VHIID signature appears at 309-313 (IHIID). Residues 359–391 (IVGKMLKSMSEEFKIPLEFTPLSVYATQVTKEM) are leucine repeat II (LRII). The interval 400-494 (LSVNFTLQLH…QHCLAKDIVN (95 aa)) is PFYRE. Positions 497–571 (ACEGKDRVER…RKLISASAWH (75 aa)) are SAW.

The protein belongs to the GRAS family.

Its subcellular location is the nucleus. Functionally, may play a regulatory role in the early step of oligosaccharide elicitor response, downstream of the membrane-associated high-affinity chitin-binding protein. The polypeptide is Chitin-inducible gibberellin-responsive protein 1 (CIGR1) (Oryza sativa subsp. japonica (Rice)).